The following is a 400-amino-acid chain: Enoyl-[acyl-carrier-protein] reductase [NADH] (400 aa).

NAD(+) is bound by residues 48–53 (GSSSGY), 74–75 (FE), 111–112 (DA), and 139–140 (LA). Tyr-225 is a substrate binding site. The active-site Proton donor is Tyr-235. NAD(+)-binding positions include Lys-244 and 273-275 (VVT).

The protein belongs to the TER reductase family. Monomer.

The catalysed reaction is a 2,3-saturated acyl-[ACP] + NAD(+) = a (2E)-enoyl-[ACP] + NADH + H(+). It functions in the pathway lipid metabolism; fatty acid biosynthesis. In terms of biological role, involved in the final reduction of the elongation cycle of fatty acid synthesis (FAS II). Catalyzes the reduction of a carbon-carbon double bond in an enoyl moiety that is covalently linked to an acyl carrier protein (ACP). This is Enoyl-[acyl-carrier-protein] reductase [NADH] from Aliivibrio salmonicida (strain LFI1238) (Vibrio salmonicida (strain LFI1238)).